We begin with the raw amino-acid sequence, 123 residues long: Fluoride-specific ion channel FluC (123 aa).

A run of 4 helical transmembrane segments spans residues 5 to 25 (VWVAVGGALGAIVRYFFYKFV), 33 to 53 (LATFLVNVVASFLLGFIIGAF), 62 to 82 (LKLALATGFCGALSTFSTFAA), and 94 to 114 (ITAFVYTAVSVGLGIVSVALG). Positions 72 and 75 each coordinate Na(+).

This sequence belongs to the fluoride channel Fluc/FEX (TC 1.A.43) family.

The protein resides in the cell inner membrane. It catalyses the reaction fluoride(in) = fluoride(out). Na(+) is not transported, but it plays an essential structural role and its presence is essential for fluoride channel function. In terms of biological role, fluoride-specific ion channel. Important for reducing fluoride concentration in the cell, thus reducing its toxicity. In Ignicoccus hospitalis (strain KIN4/I / DSM 18386 / JCM 14125), this protein is Fluoride-specific ion channel FluC.